The following is a 61-amino-acid chain: Small ribosomal subunit protein uS14 (61 aa).

4 residues coordinate Zn(2+): C24, C27, C40, and C43.

It belongs to the universal ribosomal protein uS14 family. Zinc-binding uS14 subfamily. In terms of assembly, part of the 30S ribosomal subunit. Contacts proteins S3 and S10. The cofactor is Zn(2+).

In terms of biological role, binds 16S rRNA, required for the assembly of 30S particles and may also be responsible for determining the conformation of the 16S rRNA at the A site. The sequence is that of Small ribosomal subunit protein uS14 from Malacoplasma penetrans (strain HF-2) (Mycoplasma penetrans).